Consider the following 112-residue polypeptide: Large ribosomal subunit protein uL24 (112 aa).

The segment at 92–112 (ERDGKQKTVRVRVSKSTGKDL) is disordered.

The protein belongs to the universal ribosomal protein uL24 family. Part of the 50S ribosomal subunit.

Its function is as follows. One of two assembly initiator proteins, it binds directly to the 5'-end of the 23S rRNA, where it nucleates assembly of the 50S subunit. One of the proteins that surrounds the polypeptide exit tunnel on the outside of the subunit. The protein is Large ribosomal subunit protein uL24 of Kocuria rhizophila (strain ATCC 9341 / DSM 348 / NBRC 103217 / DC2201).